Consider the following 100-residue polypeptide: MAKKSLIHREKKRQKLEQKYHLIRRSSKKEISKVPSLSEKWKIHGKLQSSPRNSAPTRLHRRCFSTGRPRANYRDFGLSGHILREMVHACLLPGATRSSW.

Belongs to the universal ribosomal protein uS14 family. As to quaternary structure, part of the 30S ribosomal subunit.

Its subcellular location is the plastid. The protein resides in the chloroplast. In terms of biological role, binds 16S rRNA, required for the assembly of 30S particles. This is Small ribosomal subunit protein uS14c from Gossypium barbadense (Sea Island cotton).